Consider the following 240-residue polypeptide: Glutamine transport ATP-binding protein GlnQ (240 aa).

An ABC transporter domain is found at 2-236; the sequence is IEFKNVSKHF…PPSQRLQEFL (235 aa). 34–41 lines the ATP pocket; sequence GPSGSGKS.

This sequence belongs to the ABC transporter superfamily. As to quaternary structure, heterotetramer with 2 subunits of GlnQ and 2 subunits of GlnP.

It is found in the cell inner membrane. In terms of biological role, part of the binding-protein-dependent transport system for glutamine. Probably responsible for energy coupling to the transport system. The sequence is that of Glutamine transport ATP-binding protein GlnQ (glnQ) from Escherichia coli (strain K12).